The primary structure comprises 725 residues: Catalase-peroxidase (725 aa).

The segment at 1–20 (MSSEAKCPFPHAANRSRSNQ) is disordered. A cross-link (tryptophyl-tyrosyl-methioninium (Trp-Tyr) (with M-241)) is located at residues 91 to 215 (WHATGTYRTM…LSATHMGLIY (125 aa)). H92 (proton acceptor) is an active-site residue. The segment at residues 215–241 (YVNPEGPDGSGDYMAAAKDIRATFYRM) is a cross-link (tryptophyl-tyrosyl-methioninium (Tyr-Met) (with W-91)). Residue H256 participates in heme b binding.

It belongs to the peroxidase family. Peroxidase/catalase subfamily. Homodimer or homotetramer. Requires heme b as cofactor. Post-translationally, formation of the three residue Trp-Tyr-Met cross-link is important for the catalase, but not the peroxidase activity of the enzyme.

The enzyme catalyses H2O2 + AH2 = A + 2 H2O. It catalyses the reaction 2 H2O2 = O2 + 2 H2O. Bifunctional enzyme with both catalase and broad-spectrum peroxidase activity. This Janthinobacterium sp. (strain Marseille) (Minibacterium massiliensis) protein is Catalase-peroxidase.